The chain runs to 304 residues: tRNA dimethylallyltransferase (304 aa).

10–17 (GPTASGKT) is an ATP binding site. 12-17 (TASGKT) contacts substrate. 3 interaction with substrate tRNA regions span residues 35–38 (DSAL), 159–163 (QRLSR), and 240–245 (RCVGYR).

This sequence belongs to the IPP transferase family. Monomer. It depends on Mg(2+) as a cofactor.

It carries out the reaction adenosine(37) in tRNA + dimethylallyl diphosphate = N(6)-dimethylallyladenosine(37) in tRNA + diphosphate. Catalyzes the transfer of a dimethylallyl group onto the adenine at position 37 in tRNAs that read codons beginning with uridine, leading to the formation of N6-(dimethylallyl)adenosine (i(6)A). This chain is tRNA dimethylallyltransferase, found in Shewanella sp. (strain W3-18-1).